An 86-amino-acid polypeptide reads, in one-letter code: Anti-adapter protein IraP (86 aa).

A coiled-coil region spans residues methionine 1–methionine 47.

This sequence belongs to the IraP family. In terms of assembly, interacts with RssB.

The protein resides in the cytoplasm. Inhibits RpoS proteolysis by regulating RssB activity, thereby increasing the stability of the sigma stress factor RpoS especially during phosphate and magnesium starvation, but also in stationary phase and during nitrogen starvation. Its effect on RpoS stability is due to its interaction with RssB, which probably blocks the interaction of RssB with RpoS, and the consequent delivery of the RssB-RpoS complex to the ClpXP protein degradation pathway. In Salmonella arizonae (strain ATCC BAA-731 / CDC346-86 / RSK2980), this protein is Anti-adapter protein IraP.